The sequence spans 265 residues: Aquaporin-5 (265 aa).

Residues 1–12 (MKKEVCSAAFLK) lie on the Cytoplasmic side of the membrane. Residues 13–33 (AVFAEFLATLIFVFFGLGSAL) form a helical membrane-spanning segment. Topologically, residues 34 to 39 (KWPSAM) are extracellular. A helical transmembrane segment spans residues 40–60 (PSVLQISLAFGLAIGTMAQAL). Residues 61–65 (GPVSG) lie on the Cytoplasmic side of the membrane. The segment at residues 66–74 (GHMNPAITL) is an intramembrane region (discontinuously helical). An NPA 1 motif is present at residues 69–71 (NPA). At 75-87 (ALLVGNQISLLRA) the chain is on the cytoplasmic side. Residues 88–108 (VFYLVAQLVGAIAGAAILYGL) traverse the membrane as a helical segment. Residues 109-126 (APYNARSNLAVNALNNNT) are Extracellular-facing. N-linked (GlcNAc...) asparagine glycosylation is found at N124 and N125. Residues 127-147 (TAGQAVVAEMILTFQLALCVF) form a helical membrane-spanning segment. Topologically, residues 148–158 (SSTDSRRTSPV) are cytoplasmic. A helical membrane pass occupies residues 159-179 (GSPALSIGLSVTLGHLVGIYF). T180 is a topological domain (extracellular). The segment at residues 181-191 (GCSMNPARSFG) is an intramembrane region (discontinuously helical). The NPA 2 motif lies at 185–187 (NPA). Topologically, residues 192 to 203 (PAVIMSRFSSAH) are extracellular. Residues 204-224 (WVFWVGPIVGAATAAIIYFYL) form a helical membrane-spanning segment. Over 225–265 (LFPHSLSLSDRVAILKGTYEPDEDWEESQEERKKTMELTAH) the chain is Cytoplasmic.

Belongs to the MIP/aquaporin (TC 1.A.8) family. Homotetramer; each monomer provides an independent water pore. Interacts with TRPV4; the interaction is probably indirect and regulates TRPV4 activation by hypotonicity.

The protein localises to the apical cell membrane. It is found in the cell membrane. It localises to the cytoplasmic vesicle membrane. The enzyme catalyses H2O(in) = H2O(out). Its function is as follows. Aquaporins form homotetrameric transmembrane channels, with each monomer independently mediating water transport across the plasma membrane along its osmotic gradient. Plays an important role in fluid secretion in salivary glands. Required for TRPV4 activation by hypotonicity. Together with TRPV4, controls regulatory volume decrease in salivary epithelial cells. Seems to play a redundant role in water transport in the eye, lung and in sweat glands. This chain is Aquaporin-5, found in Ovis aries (Sheep).